The chain runs to 318 residues: 1-aminocyclopropane-1-carboxylate oxidase (318 aa).

The region spanning 153–253 (PNFGTKVANY…RMSIASFYNP (101 aa)) is the Fe2OG dioxygenase domain. His-177, Asp-179, and His-234 together coordinate Fe cation.

Belongs to the iron/ascorbate-dependent oxidoreductase family. It depends on Fe cation as a cofactor.

The enzyme catalyses 1-aminocyclopropane-1-carboxylate + L-ascorbate + O2 = ethene + L-dehydroascorbate + hydrogen cyanide + CO2 + 2 H2O. It participates in alkene biosynthesis; ethylene biosynthesis via S-adenosyl-L-methionine; ethylene from S-adenosyl-L-methionine: step 2/2. This chain is 1-aminocyclopropane-1-carboxylate oxidase (DK-ACO1), found in Diospyros kaki (Kaki persimmon).